The primary structure comprises 467 residues: Phytase A (467 aa).

An N-terminal signal peptide occupies residues 1–23 (MGVSAVLLPLYLLAGVTSGLAVP). N-linked (GlcNAc...) asparagine glycosylation occurs at asparagine 27. An intrachain disulfide couples cysteine 31 to cysteine 40. The 1D-myo-inositol hexakisphosphate site is built by glutamine 50 and tyrosine 51. Residue asparagine 59 is glycosylated (N-linked (GlcNAc...) asparagine). 4 cysteine pairs are disulfide-bonded: cysteine 71-cysteine 414, cysteine 215-cysteine 465, cysteine 264-cysteine 282, and cysteine 436-cysteine 444. 1D-myo-inositol hexakisphosphate-binding residues include arginine 81, histidine 82, arginine 85, and threonine 88. The active-site Nucleophile is histidine 82. Residues asparagine 105 and asparagine 120 are each glycosylated (N-linked (GlcNAc...) asparagine). Position 165 (arginine 165) interacts with 1D-myo-inositol hexakisphosphate. Asparagine 207 and asparagine 230 each carry an N-linked (GlcNAc...) asparagine glycan. Lysine 301 provides a ligand contact to 1D-myo-inositol hexakisphosphate. 2 N-linked (GlcNAc...) asparagine glycosylation sites follow: asparagine 339 and asparagine 352. 1D-myo-inositol hexakisphosphate is bound by residues histidine 361 and aspartate 362. 2 N-linked (GlcNAc...) asparagine glycosylation sites follow: asparagine 376 and asparagine 388.

Belongs to the histidine acid phosphatase family. In terms of assembly, monomer.

The protein resides in the secreted. It carries out the reaction 1D-myo-inositol hexakisphosphate + H2O = 1D-myo-inositol 1,2,4,5,6-pentakisphosphate + phosphate. It catalyses the reaction 1D-myo-inositol 1,2,4,5,6-pentakisphosphate + H2O = 1D-myo-inositol 1,2,5,6-tetrakisphosphate + phosphate. The catalysed reaction is 1D-myo-inositol 1,2,5,6-tetrakisphosphate + H2O = 1D-myo-inositol 1,2,6-trisphosphate + phosphate. The enzyme catalyses 1D-myo-inositol 1,2,6-trisphosphate + H2O = 1D-myo-inositol 1,2-bisphosphate + phosphate. It carries out the reaction 1D-myo-inositol 1,2-bisphosphate + H2O = 1D-myo-inositol 2-phosphate + phosphate. Its function is as follows. Catalyzes the phosphate monoester hydrolysis of phytic acid (myo-inositol hexakisphosphate), which results in the stepwise formation of myo-inositol pentakis-, tetrakis-, tris-, bis-, and monophosphates, as well as the liberation of inorganic phosphate. Myo-inositol 2-monophosphate is the end product. The protein is Phytase A (phyA) of Aspergillus awamori (Black koji mold).